The chain runs to 504 residues: Glutamate--tRNA ligase (504 aa).

Positions 25 to 35 (PSPTGNPHVGL) match the 'HIGH' region motif. 4 residues coordinate Zn(2+): C122, C124, C149, and D151. The 'KMSKS' region signature appears at 270–274 (KLSKR). Residue K273 coordinates ATP.

It belongs to the class-I aminoacyl-tRNA synthetase family. Glutamate--tRNA ligase type 1 subfamily. In terms of assembly, monomer. The cofactor is Zn(2+).

It is found in the cytoplasm. It catalyses the reaction tRNA(Glu) + L-glutamate + ATP = L-glutamyl-tRNA(Glu) + AMP + diphosphate. Catalyzes the attachment of glutamate to tRNA(Glu) in a two-step reaction: glutamate is first activated by ATP to form Glu-AMP and then transferred to the acceptor end of tRNA(Glu). This chain is Glutamate--tRNA ligase, found in Streptomyces griseus subsp. griseus (strain JCM 4626 / CBS 651.72 / NBRC 13350 / KCC S-0626 / ISP 5235).